Reading from the N-terminus, the 329-residue chain is Haptoglobin (329 aa).

Asn9 is a glycosylation site (N-linked (GlcNAc...) asparagine). Residues 13–70 (VSLPKPPVIENGYVEHMIRYQCKPFYKLHTEGDGVYTLNSEKHWTNKAVGEKLPECEA) form the Sushi domain. 2 cysteine pairs are disulfide-bonded: Cys34–Cys68 and Cys72–Cys189. Residue Arg84 is a propeptide. Residues 85-327 (IMGGSVDAKG…VLAWVQETIA (243 aa)) form the Peptidase S1 domain. N-linked (GlcNAc...) asparagine glycosylation is found at Asn107 and Asn214. Cystine bridges form between Cys232-Cys263 and Cys274-Cys304. The interaction with CD163 stretch occupies residues 241–246 (VPEKKS).

It belongs to the peptidase S1 family. As to quaternary structure, tetramer of two alpha and two beta chains; disulfide-linked. The hemoglobin/haptoglobin complex is composed of a haptoglobin dimer bound to two hemoglobin alpha-beta dimers. Interacts with CD163. Interacts with ERGIC3. Expressed by the liver and secreted in plasma.

The protein resides in the secreted. Its subcellular location is the extracellular space. Its function is as follows. As a result of hemolysis, hemoglobin is found to accumulate in the kidney and is secreted in the urine. Haptoglobin captures, and combines with free plasma hemoglobin to allow hepatic recycling of heme iron and to prevent kidney damage. Haptoglobin also acts as an antioxidant, has antibacterial activity and plays a role in modulating many aspects of the acute phase response. Hemoglobin/haptoglobin complexes are rapidly cleared by the macrophage CD163 scavenger receptor expressed on the surface of liver Kupfer cells through an endocytic lysosomal degradation pathway. This Canis lupus familiaris (Dog) protein is Haptoglobin (HP).